Here is a 236-residue protein sequence, read N- to C-terminus: MNTTPDTPTPRALRELTPLEARILGVLVEKQHTVPDTYPLSLNALTAGCNQKTARSPVMNVSEDEVTTALDELKRLSLVMEGSSSRVPRFEHNMNRVLGIPSQAIALLTILLLRGPQTAAELRLNSARLHGFADISSVEAFLDELAARAQPLVVRLPRAPGARENRWMHLMCGEVNMADFASADAGGGADSVPPSEFEALKAEQKRLADEVARLNALVQRMASELGIDVDAPGDAS.

This sequence belongs to the UPF0502 family.

The sequence is that of UPF0502 protein Bcenmc03_4618 from Burkholderia orbicola (strain MC0-3).